Reading from the N-terminus, the 442-residue chain is D-inositol 3-phosphate glycosyltransferase (442 aa).

A 1D-myo-inositol 3-phosphate-binding site is contributed by His-15. UDP-N-acetyl-alpha-D-glucosamine is bound by residues 21–22 and Gly-29; that span reads QP. 1D-myo-inositol 3-phosphate is bound by residues 26-31, Lys-84, Tyr-117, Thr-141, and Arg-161; that span reads DAGGMN. Arg-235, Lys-240, and Gln-299 together coordinate UDP-N-acetyl-alpha-D-glucosamine. Tyr-308, Arg-309, and Ser-311 together coordinate Mg(2+). The UDP-N-acetyl-alpha-D-glucosamine site is built by Glu-321 and Glu-329. Position 335 (Thr-335) interacts with Mg(2+).

Belongs to the glycosyltransferase group 1 family. MshA subfamily. Homodimer.

The enzyme catalyses 1D-myo-inositol 3-phosphate + UDP-N-acetyl-alpha-D-glucosamine = 1D-myo-inositol 2-acetamido-2-deoxy-alpha-D-glucopyranoside 3-phosphate + UDP + H(+). Its function is as follows. Catalyzes the transfer of a N-acetyl-glucosamine moiety to 1D-myo-inositol 3-phosphate to produce 1D-myo-inositol 2-acetamido-2-deoxy-glucopyranoside 3-phosphate in the mycothiol biosynthesis pathway. This chain is D-inositol 3-phosphate glycosyltransferase, found in Rhodococcus erythropolis (strain PR4 / NBRC 100887).